A 107-amino-acid chain; its full sequence is Putative double-stranded DNA mimic protein ETA_15890 (107 aa).

Belongs to the putative dsDNA mimic protein family.

May act as a double-stranded DNA (dsDNA) mimic. Probably regulates the activity of a dsDNA-binding protein. In Erwinia tasmaniensis (strain DSM 17950 / CFBP 7177 / CIP 109463 / NCPPB 4357 / Et1/99), this protein is Putative double-stranded DNA mimic protein ETA_15890.